The primary structure comprises 252 residues: MNSMKRYIFGNWKTYKTTQEVKEFFSVLNQTKLTKNPDVVFGVAPVFVHLGLANQLERNECLVLAQDANYVMNKANTGTVSYEQLKDIGVNYVIIGHSERRKLFHESDELINQKVKTLLENKMRPILCIGETLEEYEANKTKAVLKDQLEKDLKGIDSSLLKDLIIAYEPVWAIGTGKTASSQTAQDAIAYIRTVLGLLSSKTIANELPILYGGSVTPDNVSELLAQKDINGALVGGASLDPHKFIQLIEAK.

11–13 is a binding site for substrate; it reads NWK. The Electrophile role is filled by His-97. Glu-169 (proton acceptor) is an active-site residue. Substrate is bound by residues Gly-175, Ser-215, and 236–237; that span reads GG.

This sequence belongs to the triosephosphate isomerase family. As to quaternary structure, homodimer.

It is found in the cytoplasm. It catalyses the reaction D-glyceraldehyde 3-phosphate = dihydroxyacetone phosphate. The protein operates within carbohydrate biosynthesis; gluconeogenesis. It participates in carbohydrate degradation; glycolysis; D-glyceraldehyde 3-phosphate from glycerone phosphate: step 1/1. In terms of biological role, involved in the gluconeogenesis. Catalyzes stereospecifically the conversion of dihydroxyacetone phosphate (DHAP) to D-glyceraldehyde-3-phosphate (G3P). In Mycoplasmoides gallisepticum (strain R(low / passage 15 / clone 2)) (Mycoplasma gallisepticum), this protein is Triosephosphate isomerase.